Consider the following 196-residue polypeptide: Large ribosomal subunit protein eL15 (196 aa).

The disordered stretch occupies residues 153–196; the sequence is DPSSRGRATRGKTSAGRKGRGMATRGKGTEKTRPSIRAYKSRGK. Residues 159–172 are compositionally biased toward basic residues; sequence RATRGKTSAGRKGR.

The protein belongs to the eukaryotic ribosomal protein eL15 family.

The protein is Large ribosomal subunit protein eL15 of Methanosarcina acetivorans (strain ATCC 35395 / DSM 2834 / JCM 12185 / C2A).